The chain runs to 204 residues: Leucyl/phenylalanyl-tRNA--protein transferase (204 aa).

It belongs to the L/F-transferase family.

The protein resides in the cytoplasm. It carries out the reaction N-terminal L-lysyl-[protein] + L-leucyl-tRNA(Leu) = N-terminal L-leucyl-L-lysyl-[protein] + tRNA(Leu) + H(+). It catalyses the reaction N-terminal L-arginyl-[protein] + L-leucyl-tRNA(Leu) = N-terminal L-leucyl-L-arginyl-[protein] + tRNA(Leu) + H(+). The enzyme catalyses L-phenylalanyl-tRNA(Phe) + an N-terminal L-alpha-aminoacyl-[protein] = an N-terminal L-phenylalanyl-L-alpha-aminoacyl-[protein] + tRNA(Phe). In terms of biological role, functions in the N-end rule pathway of protein degradation where it conjugates Leu, Phe and, less efficiently, Met from aminoacyl-tRNAs to the N-termini of proteins containing an N-terminal arginine or lysine. This Brucella melitensis biotype 2 (strain ATCC 23457) protein is Leucyl/phenylalanyl-tRNA--protein transferase.